The sequence spans 350 residues: Probable V-type proton ATPase subunit d 2 (350 aa).

This sequence belongs to the V-ATPase V0D/AC39 subunit family. V-ATPase is a heteromultimeric enzyme made up of two complexes: the ATP-hydrolytic V1 complex and the proton translocation V0 complex. The V1 complex consists of three catalytic AB heterodimers that form a heterohexamer, three peripheral stalks each consisting of EG heterodimers, one central rotor including subunits D and F, and the regulatory subunits C and H. The proton translocation complex V0 consists of the proton transport subunit a, a ring of proteolipid subunits c9c'', rotary subunit d, subunits e and f, and the accessory subunits VhaAC45 and ATP6AP2.

In terms of biological role, subunit of the V0 complex of vacuolar(H+)-ATPase (V-ATPase), a multisubunit enzyme composed of a peripheral complex (V1) that hydrolyzes ATP and a membrane integral complex (V0) that translocates protons. V-ATPase is responsible for acidifying and maintaining the pH of intracellular compartments and in some cell types, is targeted to the plasma membrane, where it is responsible for acidifying the extracellular environment. May play a role in coupling of proton transport and ATP hydrolysis. The sequence is that of Probable V-type proton ATPase subunit d 2 (VhaAC39-2) from Drosophila melanogaster (Fruit fly).